The chain runs to 209 residues: Large ribosomal subunit protein uL3 (209 aa).

Gln150 carries the N5-methylglutamine modification.

Belongs to the universal ribosomal protein uL3 family. As to quaternary structure, part of the 50S ribosomal subunit. Forms a cluster with proteins L14 and L19. Methylated by PrmB.

Its function is as follows. One of the primary rRNA binding proteins, it binds directly near the 3'-end of the 23S rRNA, where it nucleates assembly of the 50S subunit. In Buchnera aphidicola subsp. Schizaphis graminum (strain Sg), this protein is Large ribosomal subunit protein uL3.